Reading from the N-terminus, the 478-residue chain is Calcium/calmodulin-dependent protein kinase type II subunit alpha (478 aa).

Position 13 is a phosphotyrosine (Tyr13). A Protein kinase domain is found at 13-271 (YQLFEELGKG…AAEALKHPWI (259 aa)). Residues 19-27 (LGKGAFSVV) and Lys42 contribute to the ATP site. The Proton acceptor role is filled by Asp135. At Ser257 the chain carries Phosphoserine. Thr286 carries the post-translational modification Phosphothreonine; by autocatalysis. The segment at 290-300 (LKKFNARRKLK) is calmodulin-binding. The segment at 310–320 (TRNFSGGKSGG) is interaction with BAALC. A disordered region spans residues 314–341 (SGGKSGGNKKNDGVKESSESTNTTIEDE). The segment covering 322–331 (KKNDGVKESS) has biased composition (basic and acidic residues). Phosphoserine is present on residues Ser330, Ser331, and Ser333. Phosphothreonine is present on residues Thr336 and Thr337. Ser404 carries the phosphoserine modification.

Belongs to the protein kinase superfamily. CAMK Ser/Thr protein kinase family. CaMK subfamily. There are 4 genes encoding calcium/calmodulin-dependent protein kinase type II chains: CAMK2A, CAMK2B, CAMK2G and CAMK2D. The corresponding proteins assemble into homo- or heteromultimeric holoenzymes composed of 12 subunits with two hexameric rings stacked one on top of the other. Interacts with BAALC. Interacts with MPDZ. Interacts with SYN1. Interacts with CAMK2N2. Interacts with SYNGAP1. Interacts with SYNPO2. Interacts with SHANK3. Interacts with GRIN2B. Interacts with CACNB2. Interacts with LRRC7. Interacts with GRM5. Interacts with DAGLA (via C-terminal); this interaction is enhanced by autophosphorylation of CAMK2A at Thr-286. Interacts with CAMK2N1; this interaction requires CAMK2A activation by Ca(2+). It depends on Mg(2+) as a cofactor. Post-translationally, autophosphorylation of Thr-286 following activation by Ca(2+)/calmodulin. Phosphorylation of Thr-286 locks the kinase into an activated state. Palmitoylated. Probably palmitoylated by ZDHHC3 and ZDHHC7. As to expression, expressed in brain. Expressed in skeletal muscle.

It localises to the cytoplasm. Its subcellular location is the synapse. The protein localises to the postsynaptic density. The protein resides in the cell projection. It is found in the dendritic spine. It localises to the dendrite. The enzyme catalyses L-seryl-[protein] + ATP = O-phospho-L-seryl-[protein] + ADP + H(+). It catalyses the reaction L-threonyl-[protein] + ATP = O-phospho-L-threonyl-[protein] + ADP + H(+). With respect to regulation, activated by Ca(2+)/calmodulin. Binding of calmodulin results in conformational change that relieves intrasteric autoinhibition and allows autophosphorylation of Thr-286 which turns the kinase in a constitutively active form and confers to the kinase a Ca(2+)-independent activity. Its function is as follows. Calcium/calmodulin-dependent protein kinase that functions autonomously after Ca(2+)/calmodulin-binding and autophosphorylation, and is involved in various processes, such as synaptic plasticity, neurotransmitter release and long-term potentiation. Member of the NMDAR signaling complex in excitatory synapses, it regulates NMDAR-dependent potentiation of the AMPAR and therefore excitatory synaptic transmission. Regulates dendritic spine development. Also regulates the migration of developing neurons. Phosphorylates the transcription factor FOXO3 to activate its transcriptional activity. Phosphorylates the transcription factor ETS1 in response to calcium signaling, thereby decreasing ETS1 affinity for DNA. In response to interferon-gamma (IFN-gamma) stimulation, catalyzes phosphorylation of STAT1, stimulating the JAK-STAT signaling pathway. In response to interferon-beta (IFN-beta) stimulation, stimulates the JAK-STAT signaling pathway. Acts as a negative regulator of 2-arachidonoylglycerol (2-AG)-mediated synaptic signaling via modulation of DAGLA activity. In terms of biological role, has no kinase activity. The sequence is that of Calcium/calmodulin-dependent protein kinase type II subunit alpha (Camk2a) from Mus musculus (Mouse).